The primary structure comprises 540 residues: 2-succinyl-5-enolpyruvyl-6-hydroxy-3-cyclohexene-1-carboxylate synthase (540 aa).

Belongs to the TPP enzyme family. MenD subfamily. Homodimer. The cofactor is Mg(2+). Mn(2+) serves as cofactor. Requires thiamine diphosphate as cofactor.

It carries out the reaction isochorismate + 2-oxoglutarate + H(+) = 5-enolpyruvoyl-6-hydroxy-2-succinyl-cyclohex-3-ene-1-carboxylate + CO2. It participates in quinol/quinone metabolism; 1,4-dihydroxy-2-naphthoate biosynthesis; 1,4-dihydroxy-2-naphthoate from chorismate: step 2/7. Its pathway is quinol/quinone metabolism; menaquinone biosynthesis. Its function is as follows. Catalyzes the thiamine diphosphate-dependent decarboxylation of 2-oxoglutarate and the subsequent addition of the resulting succinic semialdehyde-thiamine pyrophosphate anion to isochorismate to yield 2-succinyl-5-enolpyruvyl-6-hydroxy-3-cyclohexene-1-carboxylate (SEPHCHC). In Mycobacteroides abscessus (strain ATCC 19977 / DSM 44196 / CCUG 20993 / CIP 104536 / JCM 13569 / NCTC 13031 / TMC 1543 / L948) (Mycobacterium abscessus), this protein is 2-succinyl-5-enolpyruvyl-6-hydroxy-3-cyclohexene-1-carboxylate synthase.